Consider the following 452-residue polypeptide: tRNA modification GTPase MnmE (452 aa).

Positions 21, 78, and 118 each coordinate (6S)-5-formyl-5,6,7,8-tetrahydrofolate. Residues 214–375 (GMKAVIAGRP…LREHLKTSMG (162 aa)) form the TrmE-type G domain. N224 serves as a coordination point for K(+). Residues 224–229 (NAGKSS), 243–249 (TNIAGTT), and 268–271 (DTAG) contribute to the GTP site. S228 lines the Mg(2+) pocket. Residues T243, I245, and T248 each contribute to the K(+) site. T249 contributes to the Mg(2+) binding site. Position 452 (K452) interacts with (6S)-5-formyl-5,6,7,8-tetrahydrofolate.

Belongs to the TRAFAC class TrmE-Era-EngA-EngB-Septin-like GTPase superfamily. TrmE GTPase family. Homodimer. Heterotetramer of two MnmE and two MnmG subunits. Requires K(+) as cofactor.

It is found in the cytoplasm. Functionally, exhibits a very high intrinsic GTPase hydrolysis rate. Involved in the addition of a carboxymethylaminomethyl (cmnm) group at the wobble position (U34) of certain tRNAs, forming tRNA-cmnm(5)s(2)U34. This chain is tRNA modification GTPase MnmE, found in Haemophilus ducreyi (strain 35000HP / ATCC 700724).